Consider the following 97-residue polypeptide: Integration host factor subunit alpha (97 aa).

Belongs to the bacterial histone-like protein family. In terms of assembly, heterodimer of an alpha and a beta chain.

In terms of biological role, this protein is one of the two subunits of integration host factor, a specific DNA-binding protein that functions in genetic recombination as well as in transcriptional and translational control. This is Integration host factor subunit alpha from Hydrogenovibrio crunogenus (strain DSM 25203 / XCL-2) (Thiomicrospira crunogena).